The chain runs to 396 residues: Phosphoglycerate kinase (396 aa).

Substrate contacts are provided by residues 21–23, R36, 59–62, R113, and R146; these read DLN and HLGR. Residues K197, E319, and 345–348 contribute to the ATP site; that span reads GGDT.

Belongs to the phosphoglycerate kinase family. As to quaternary structure, monomer.

The protein resides in the cytoplasm. It carries out the reaction (2R)-3-phosphoglycerate + ATP = (2R)-3-phospho-glyceroyl phosphate + ADP. Its pathway is carbohydrate degradation; glycolysis; pyruvate from D-glyceraldehyde 3-phosphate: step 2/5. In Legionella pneumophila (strain Corby), this protein is Phosphoglycerate kinase.